We begin with the raw amino-acid sequence, 142 residues long: 2-aminomuconate deaminase (142 aa).

It belongs to the 2-aminomuconate deaminase family. As to quaternary structure, homotetramer.

The catalysed reaction is (2Z,4E)-2-aminomuconate + H2O = (3E)-2-oxohex-3-enedioate + NH4(+). Slightly inhibited by Pb(2+), Hg(+) and Cu(2+). Involved in the modified meta-cleavage pathway for the 2-aminophenol catabolism. Only active toward 2-aminomuconic acid. This chain is 2-aminomuconate deaminase (amnD), found in Pseudomonas sp.